A 206-amino-acid chain; its full sequence is Large ribosomal subunit protein uL4 (206 aa).

Belongs to the universal ribosomal protein uL4 family. Part of the 50S ribosomal subunit.

Its function is as follows. One of the primary rRNA binding proteins, this protein initially binds near the 5'-end of the 23S rRNA. It is important during the early stages of 50S assembly. It makes multiple contacts with different domains of the 23S rRNA in the assembled 50S subunit and ribosome. In terms of biological role, forms part of the polypeptide exit tunnel. The chain is Large ribosomal subunit protein uL4 from Cereibacter sphaeroides (strain KD131 / KCTC 12085) (Rhodobacter sphaeroides).